The following is a 495-amino-acid chain: Lysine--tRNA ligase (495 aa).

Mg(2+) is bound by residues Glu-406 and Glu-413.

Belongs to the class-II aminoacyl-tRNA synthetase family. Homodimer. Mg(2+) serves as cofactor.

It is found in the cytoplasm. The catalysed reaction is tRNA(Lys) + L-lysine + ATP = L-lysyl-tRNA(Lys) + AMP + diphosphate. The chain is Lysine--tRNA ligase from Staphylococcus aureus (strain COL).